The chain runs to 198 residues: tRNA (pseudouridine(54)-N(1))-methyltransferase (198 aa).

Residue leucine 128 coordinates S-adenosyl-L-methionine.

It belongs to the methyltransferase superfamily. TrmY family. In terms of assembly, homodimer.

It is found in the cytoplasm. The catalysed reaction is pseudouridine(54) in tRNA + S-adenosyl-L-methionine = N(1)-methylpseudouridine(54) in tRNA + S-adenosyl-L-homocysteine + H(+). Functionally, specifically catalyzes the N1-methylation of pseudouridine at position 54 (Psi54) in tRNAs. This chain is tRNA (pseudouridine(54)-N(1))-methyltransferase, found in Haloarcula marismortui (strain ATCC 43049 / DSM 3752 / JCM 8966 / VKM B-1809) (Halobacterium marismortui).